We begin with the raw amino-acid sequence, 458 residues long: Argininosuccinate lyase (458 aa).

The protein belongs to the lyase 1 family. Argininosuccinate lyase subfamily.

The protein resides in the cytoplasm. The enzyme catalyses 2-(N(omega)-L-arginino)succinate = fumarate + L-arginine. Its pathway is amino-acid biosynthesis; L-arginine biosynthesis; L-arginine from L-ornithine and carbamoyl phosphate: step 3/3. This is Argininosuccinate lyase from Neisseria meningitidis serogroup A / serotype 4A (strain DSM 15465 / Z2491).